We begin with the raw amino-acid sequence, 382 residues long: Pyrimidine monooxygenase RutA (382 aa).

FMN is bound by residues 68–69 (IK), Asn-134, Glu-143, 159–160 (RY), and Ser-209.

The protein belongs to the NtaA/SnaA/DszA monooxygenase family. RutA subfamily.

It carries out the reaction uracil + FMNH2 + NADH + O2 = (Z)-3-ureidoacrylate + FMN + NAD(+) + H2O + H(+). It catalyses the reaction thymine + FMNH2 + NADH + O2 = (Z)-2-methylureidoacrylate + FMN + NAD(+) + H2O + H(+). In terms of biological role, catalyzes the pyrimidine ring opening between N-3 and C-4 by an unusual flavin hydroperoxide-catalyzed mechanism, adding oxygen atoms in the process to yield ureidoacrylate peracid, that immediately reacts with FMN forming ureidoacrylate and FMN-N(5)-oxide. The FMN-N(5)-oxide reacts spontaneously with NADH to produce FMN. Requires the flavin reductase RutF to regenerate FMN in vivo. The chain is Pyrimidine monooxygenase RutA from Shigella flexneri serotype X (strain 2002017).